The sequence spans 335 residues: UPF0353 protein MUL_1490 (335 aa).

A run of 2 helical transmembrane segments spans residues 18 to 38 and 67 to 87; these read WFFL…VLQL and IPAM…AGPT. Residues 98–298 enclose the VWFA domain; it reads VVMLVIDVSQ…SVYVSLQQQI (201 aa). A helical membrane pass occupies residues 309 to 329; sequence MGWLRLGALVLVAAALAALLI.

It belongs to the UPF0353 family.

It is found in the cell membrane. The protein is UPF0353 protein MUL_1490 of Mycobacterium ulcerans (strain Agy99).